A 233-amino-acid chain; its full sequence is Large ribosomal subunit protein uL1 (233 aa).

This sequence belongs to the universal ribosomal protein uL1 family. As to quaternary structure, part of the 50S ribosomal subunit.

Binds directly to 23S rRNA. The L1 stalk is quite mobile in the ribosome, and is involved in E site tRNA release. In terms of biological role, protein L1 is also a translational repressor protein, it controls the translation of the L11 operon by binding to its mRNA. In Geobacillus kaustophilus (strain HTA426), this protein is Large ribosomal subunit protein uL1.